The chain runs to 298 residues: MSDSEGGVEVSSPRLLIVTGMSGAGKTQAVQSLEDLGYFCVDNLPPALIPKFAELVSQSNGKVEKVALVVDIRGGAFFHQAIEVLHDLGEQGYRFEVLFLEASDETLVRRYKESRRRHPLDNHGEVLKVIQEERELLREIRGRATKVIDTSNVSNNQLKEQIITQYGGDKENSNRLLITVISFGYKYGIPMDSDLVLDVRFLPNPYYIPELRCLTGNDEPVQQHVMSQDVTKEFMEKLIDFVQFLVPHYQREGKATLMIAIGCTGGMHRSVTLTNKLGEVLSEKGYRVNVRHRDIMRV.

Residue Gly-20–Thr-27 coordinates ATP. Asp-71–Gly-74 is a GTP binding site.

Belongs to the RapZ-like family.

Displays ATPase and GTPase activities. The polypeptide is Nucleotide-binding protein Dred_3054 (Desulforamulus reducens (strain ATCC BAA-1160 / DSM 100696 / MI-1) (Desulfotomaculum reducens)).